A 352-amino-acid chain; its full sequence is NADP-dependent isopropanol dehydrogenase (352 aa).

Positions 37, 59, and 150 each coordinate Zn(2+). NADP(+)-binding positions include 175-178 (IGPV), 198-200 (GSR), Y218, 265-267 (VNY), and K340.

The protein belongs to the zinc-containing alcohol dehydrogenase family. As to quaternary structure, homotetramer. The cofactor is Zn(2+).

It catalyses the reaction propan-2-ol + NADP(+) = acetone + NADPH + H(+). Its function is as follows. Alcohol dehydrogenase with a preference for medium chain secondary alcohols, such as 2-butanol and isopropanol. Has very low activity with primary alcohols, such as ethanol. Under physiological conditions, the enzyme reduces aldehydes and 2-ketones to produce secondary alcohols. Is also active with acetaldehyde and propionaldehyde. The protein is NADP-dependent isopropanol dehydrogenase (adh) of Thermoanaerobacter brockii (Thermoanaerobium brockii).